A 226-amino-acid chain; its full sequence is Ribonuclease HII (226 aa).

An RNase H type-2 domain is found at 29–220; it reads GPVAGVDEAG…VVAAGVRLEQ (192 aa). The a divalent metal cation site is built by Asp-35, Glu-36, and Asp-129.

Belongs to the RNase HII family. The cofactor is Mn(2+). It depends on Mg(2+) as a cofactor.

It is found in the cytoplasm. It carries out the reaction Endonucleolytic cleavage to 5'-phosphomonoester.. Its function is as follows. Endonuclease that specifically degrades the RNA of RNA-DNA hybrids. This is Ribonuclease HII from Rhodococcus erythropolis (strain PR4 / NBRC 100887).